A 356-amino-acid chain; its full sequence is MLDRLQSLEDRYNKLNEMLSDPEVINDSKKLREYSKEQSGLEDVVQAYREYKEVTEQLNDAKEMMEDKLDDEMYEMVKAEIAELNGRKEELESSMKILLLPKDPNDDKNVFMEIRGAAGGDEAALFAGDLYRMYSRYAEHQGWKIDVMEASSTGVGGYKEVIFMINGSDVYSKLKYENGAHRVQRVPETESGGRIHTSTATVAVLPEAEEVEVEVHDKDIRVDTFASSGPGGQSVNTTMSAVRLTHVPTGIVVSIQDEKSQIKNKEKAMKVLRARIYDKFQQEAQAEYDENRKSAVGSGDRSERIRTYNFPQNRVTDHRIGLTIQKLDQIMQGKLDEFIDALVMEEQTNKLEQIGE.

An N5-methylglutamine modification is found at glutamine 233.

Belongs to the prokaryotic/mitochondrial release factor family. Post-translationally, methylated by PrmC. Methylation increases the termination efficiency of RF1.

It is found in the cytoplasm. In terms of biological role, peptide chain release factor 1 directs the termination of translation in response to the peptide chain termination codons UAG and UAA. This chain is Peptide chain release factor 1, found in Oceanobacillus iheyensis (strain DSM 14371 / CIP 107618 / JCM 11309 / KCTC 3954 / HTE831).